The following is a 137-amino-acid chain: Large ribosomal subunit protein uL16c (137 aa).

The protein belongs to the universal ribosomal protein uL16 family. As to quaternary structure, part of the 50S ribosomal subunit.

It localises to the plastid. It is found in the chloroplast. This Adiantum capillus-veneris (Maidenhair fern) protein is Large ribosomal subunit protein uL16c.